Consider the following 165-residue polypeptide: UI (165 aa).

Residues 1-18 (MKPVPLILLLATVLLSSH) form the signal peptide. Position 163 is a valine amide (Val163).

It belongs to the sauvagine/corticotropin-releasing factor/urotensin I family.

It localises to the secreted. In terms of biological role, urotensin is found in the teleost caudal neurosecretory system. It has a suggested role in osmoregulation and as a corticotropin-releasing factor. The non-hormonal portion of this precursor may be a urotensin binding protein, urophysin. The sequence is that of UI from Oncorhynchus mykiss (Rainbow trout).